Here is a 301-residue protein sequence, read N- to C-terminus: Glycine--tRNA ligase alpha subunit (301 aa).

Belongs to the class-II aminoacyl-tRNA synthetase family. As to quaternary structure, tetramer of two alpha and two beta subunits.

It localises to the cytoplasm. The enzyme catalyses tRNA(Gly) + glycine + ATP = glycyl-tRNA(Gly) + AMP + diphosphate. This Shewanella halifaxensis (strain HAW-EB4) protein is Glycine--tRNA ligase alpha subunit.